We begin with the raw amino-acid sequence, 237 residues long: Uracil-DNA glycosylase (237 aa).

Asp-77 functions as the Proton acceptor in the catalytic mechanism.

The protein belongs to the uracil-DNA glycosylase (UDG) superfamily. UNG family.

The protein localises to the cytoplasm. The enzyme catalyses Hydrolyzes single-stranded DNA or mismatched double-stranded DNA and polynucleotides, releasing free uracil.. Excises uracil residues from the DNA which can arise as a result of misincorporation of dUMP residues by DNA polymerase or due to deamination of cytosine. The sequence is that of Uracil-DNA glycosylase from Acinetobacter baumannii (strain AB307-0294).